The primary structure comprises 225 residues: Holliday junction branch migration complex subunit RuvA (225 aa).

The segment at 1 to 71 (MISWINGDLV…EDSDLLFGFT (71 aa)) is domain I. Residues 72-150 (SKDQKNFFIE…SEILSEEEKS (79 aa)) form a domain II region. Positions 151–161 (KDEFEIKDPEI) are flexible linker. The segment at 161–225 (IIKMIEDLQL…LDEDSSNKDR (65 aa)) is domain III.

This sequence belongs to the RuvA family. Homotetramer. Forms an RuvA(8)-RuvB(12)-Holliday junction (HJ) complex. HJ DNA is sandwiched between 2 RuvA tetramers; dsDNA enters through RuvA and exits via RuvB. An RuvB hexamer assembles on each DNA strand where it exits the tetramer. Each RuvB hexamer is contacted by two RuvA subunits (via domain III) on 2 adjacent RuvB subunits; this complex drives branch migration. In the full resolvosome a probable DNA-RuvA(4)-RuvB(12)-RuvC(2) complex forms which resolves the HJ.

It is found in the cytoplasm. In terms of biological role, the RuvA-RuvB-RuvC complex processes Holliday junction (HJ) DNA during genetic recombination and DNA repair, while the RuvA-RuvB complex plays an important role in the rescue of blocked DNA replication forks via replication fork reversal (RFR). RuvA specifically binds to HJ cruciform DNA, conferring on it an open structure. The RuvB hexamer acts as an ATP-dependent pump, pulling dsDNA into and through the RuvAB complex. HJ branch migration allows RuvC to scan DNA until it finds its consensus sequence, where it cleaves and resolves the cruciform DNA. This chain is Holliday junction branch migration complex subunit RuvA, found in Prochlorococcus marinus (strain AS9601).